The following is a 705-amino-acid chain: DNA ligase (705 aa).

Residues 42–46, 91–92, and E125 contribute to the NAD(+) site; these read DADFD and SL. The active-site N6-AMP-lysine intermediate is K127. R148, E183, K299, and K323 together coordinate NAD(+). 4 residues coordinate Zn(2+): C428, C431, C446, and C452. Positions 626 to 705 constitute a BRCT domain; the sequence is TDGSPVAGKT…DGWLALIEGL (80 aa).

It belongs to the NAD-dependent DNA ligase family. LigA subfamily. Mg(2+) is required as a cofactor. Requires Mn(2+) as cofactor.

The catalysed reaction is NAD(+) + (deoxyribonucleotide)n-3'-hydroxyl + 5'-phospho-(deoxyribonucleotide)m = (deoxyribonucleotide)n+m + AMP + beta-nicotinamide D-nucleotide.. DNA ligase that catalyzes the formation of phosphodiester linkages between 5'-phosphoryl and 3'-hydroxyl groups in double-stranded DNA using NAD as a coenzyme and as the energy source for the reaction. It is essential for DNA replication and repair of damaged DNA. The chain is DNA ligase from Roseobacter denitrificans (strain ATCC 33942 / OCh 114) (Erythrobacter sp. (strain OCh 114)).